Reading from the N-terminus, the 561-residue chain is PR domain zinc finger protein 14 (561 aa).

The disordered stretch occupies residues 1–20 (MALPPSGETQSQDKANYLPQ). Over residues 7 to 20 (GETQSQDKANYLPQ) the composition is skewed to polar residues. The segment at 184–373 (GFNFTEEELS…GVPMNLRVTE (190 aa)) is interaction with CBFA2T2. The region spanning 241 to 356 (EGLCLMQTSF…RNQELLVWYG (116 aa)) is the SET domain. S-adenosyl-L-methionine is bound at residue Tyr355. A C2H2-type 1; atypical zinc finger spans residues 390–416 (YRCERCGKVFTYKYYRDKHLKYTPCVD). 5 consecutive C2H2-type zinc fingers follow at residues 422–445 (FPCS…LHVH), 451–473 (YLCS…MRVH), 479–501 (YQCV…IRQH), 507–530 (FKCK…RRSH), and 536–558 (SSCD…MRLH).

The protein belongs to the class V-like SAM-binding methyltransferase superfamily. In terms of assembly, interacts with CBFA2T2. In terms of tissue distribution, restricted to embryonic stem cells and primordial germ cells. Not detected in epiblast-derived stem cells.

It localises to the nucleus. Transcription factor that has both positive and negative roles on transcription. Plays a role in cellular pluripotency. Essential for germ cell development at 2 levels: the reacquisition of potential pluripotency, including SOX2 up-regulation, and successful epigenetic reprogramming, characterized by EHMT1 repression. Its association with CBFA2T2 is required for the functions in pluripotency and germ cell formation. This Mus musculus (Mouse) protein is PR domain zinc finger protein 14 (Prdm14).